Reading from the N-terminus, the 1169-residue chain is ATP-dependent helicase/deoxyribonuclease subunit B (1169 aa).

The region spanning 1-285 (MEIQFLAGRS…TIFERNHRHL (285 aa)) is the UvrD-like helicase ATP-binding domain. 8 to 15 (GRSGSGKT) lines the ATP pocket. Residues 280–586 (RNHRHLYTPD…KFALIPPSLD (307 aa)) enclose the UvrD-like helicase C-terminal domain. Cysteine 801, cysteine 1121, cysteine 1124, and cysteine 1130 together coordinate [4Fe-4S] cluster.

This sequence belongs to the helicase family. AddB/RexB type 1 subfamily. In terms of assembly, heterodimer of AddA and AddB. Requires Mg(2+) as cofactor. [4Fe-4S] cluster serves as cofactor.

Its function is as follows. The heterodimer acts as both an ATP-dependent DNA helicase and an ATP-dependent, dual-direction single-stranded exonuclease. Recognizes the chi site generating a DNA molecule suitable for the initiation of homologous recombination. The AddB subunit has 5' -&gt; 3' nuclease activity but not helicase activity. The sequence is that of ATP-dependent helicase/deoxyribonuclease subunit B from Bacillus pumilus (strain SAFR-032).